We begin with the raw amino-acid sequence, 118 residues long: Large ribosomal subunit protein bL17 (118 aa).

It belongs to the bacterial ribosomal protein bL17 family. Part of the 50S ribosomal subunit. Contacts protein L32.

In Aster yellows witches'-broom phytoplasma (strain AYWB), this protein is Large ribosomal subunit protein bL17.